A 702-amino-acid polypeptide reads, in one-letter code: Elongation factor G (702 aa).

The region spanning 9–292 (DRTRNIGIMA…AVVDYLPSPL (284 aa)) is the tr-type G domain. GTP contacts are provided by residues 18–25 (AHIDAGKT), 91–95 (DTPGH), and 145–148 (NKMD).

Belongs to the TRAFAC class translation factor GTPase superfamily. Classic translation factor GTPase family. EF-G/EF-2 subfamily.

The protein localises to the cytoplasm. Catalyzes the GTP-dependent ribosomal translocation step during translation elongation. During this step, the ribosome changes from the pre-translocational (PRE) to the post-translocational (POST) state as the newly formed A-site-bound peptidyl-tRNA and P-site-bound deacylated tRNA move to the P and E sites, respectively. Catalyzes the coordinated movement of the two tRNA molecules, the mRNA and conformational changes in the ribosome. This is Elongation factor G from Oenococcus oeni (strain ATCC BAA-331 / PSU-1).